We begin with the raw amino-acid sequence, 381 residues long: Guanine nucleotide-binding protein G(s) subunit alpha (381 aa).

Cysteine 3 carries the S-palmitoyl cysteine lipid modification. The G-alpha domain maps to 36–381; it reads ALHRLLLLGA…RMHLQKYELL (346 aa). The segment at 39–52 is G1 motif; it reads RLLLLGAGESGKST. GTP-binding positions include 44–51, 183–189, 208–212, 277–280, and alanine 353; these read GAGESGKS, LRCRVLT, GVGGQ, and NKQD. The Mg(2+) site is built by serine 51 and threonine 189. Residues 181–189 form a G2 motif region; it reads DILRCRVLT. A G3 motif region spans residues 204–213; it reads FYMFGVGGQR. Residues 273–280 form a G4 motif region; sequence ILFLNKQD. Residues 351-356 are G5 motif; sequence TTAVDT.

The protein belongs to the G-alpha family. G(s) subfamily. In terms of assembly, g proteins are composed of 3 units; alpha, beta and gamma. The alpha chain contains the guanine nucleotide binding site.

Functionally, guanine nucleotide-binding proteins (G proteins) are involved as modulators or transducers in various transmembrane signaling systems. The G(s) protein is involved in hormonal regulation of adenylate cyclase: it activates the cyclase in response to beta-adrenergic stimuli. The sequence is that of Guanine nucleotide-binding protein G(s) subunit alpha from Geodia cydonium (Sponge).